The primary structure comprises 210 residues: Ribosomal RNA large subunit methyltransferase E (210 aa).

5 residues coordinate S-adenosyl-L-methionine: glycine 67, tryptophan 69, aspartate 87, aspartate 103, and aspartate 128. Catalysis depends on lysine 168, which acts as the Proton acceptor.

The protein belongs to the class I-like SAM-binding methyltransferase superfamily. RNA methyltransferase RlmE family.

It localises to the cytoplasm. The enzyme catalyses uridine(2552) in 23S rRNA + S-adenosyl-L-methionine = 2'-O-methyluridine(2552) in 23S rRNA + S-adenosyl-L-homocysteine + H(+). Functionally, specifically methylates the uridine in position 2552 of 23S rRNA at the 2'-O position of the ribose in the fully assembled 50S ribosomal subunit. The protein is Ribosomal RNA large subunit methyltransferase E of Psychrobacter cryohalolentis (strain ATCC BAA-1226 / DSM 17306 / VKM B-2378 / K5).